The following is a 224-amino-acid chain: Synaptonemal complex protein 3 (224 aa).

Coiled coils occupy residues 63–97 and 137–171; these read RVKC…WEER and HDSM…QSST.

In terms of assembly, interacts with gras-1. Interacts with brc-1 and brd-1.

It is found in the chromosome. In terms of biological role, plays a role in early meiotic events; during prophase I contributes to synaptonemal complex (SC) assembly, synapsis and chiasmata formation and stabilization of homologous chromosomes pairing. Required for restricting SC assembly to bridge paired chromosome axes. Required for the timely progression of meiotic crossover recombination. Required for the synapsis checkpoint. This is Synaptonemal complex protein 3 from Caenorhabditis elegans.